The chain runs to 164 residues: B-phycoerythrin alpha chain (164 aa).

(2R,3E)-phycoerythrobilin contacts are provided by cysteine 82 and cysteine 139.

This sequence belongs to the phycobiliprotein family. Heteromer of 6 alpha, 6 beta and one gamma chain. Post-translationally, contains two covalently linked bilin chromophores.

Its subcellular location is the plastid. The protein resides in the chloroplast thylakoid membrane. Functionally, light-harvesting photosynthetic bile pigment-protein from the phycobiliprotein complex. The polypeptide is B-phycoerythrin alpha chain (cpeA) (Porphyridium sordidum (Red alga)).